Reading from the N-terminus, the 113-residue chain is Carrot ABA-induced in somatic embryos 3 (113 aa).

Composition is skewed to basic and acidic residues over residues 1–17 (MASGQEKRSELDARAKQ), 32–52 (EAQEHLAEGRSKGGHTRKEQL), and 65–77 (GETRREQMGKEGY). The segment at 1–113 (MASGQEKRSE…IDQSKFRTKS (113 aa)) is disordered.

This sequence belongs to the small hydrophilic plant seed protein family. Expressed in embryogenic cells, somatic embryos and seeds at the later stages of development. Not detected in leaves.

This Daucus carota (Wild carrot) protein is Carrot ABA-induced in somatic embryos 3.